A 589-amino-acid polypeptide reads, in one-letter code: Aspartate--tRNA ligase 2 (589 aa).

Position 174 (E174) interacts with L-aspartate. Positions 198 to 201 (QITK) are aspartate. R220 lines the L-aspartate pocket. ATP-binding positions include 220 to 222 (RDE) and Q229. H443 provides a ligand contact to L-aspartate. E477 contacts ATP. L-aspartate is bound at residue R484. ATP is bound at residue 529 to 532 (GLDR).

It belongs to the class-II aminoacyl-tRNA synthetase family. Type 1 subfamily. As to quaternary structure, homodimer.

The protein localises to the cytoplasm. It catalyses the reaction tRNA(Asp) + L-aspartate + ATP = L-aspartyl-tRNA(Asp) + AMP + diphosphate. Catalyzes the attachment of L-aspartate to tRNA(Asp) in a two-step reaction: L-aspartate is first activated by ATP to form Asp-AMP and then transferred to the acceptor end of tRNA(Asp). The protein is Aspartate--tRNA ligase 2 of Streptococcus mutans serotype c (strain ATCC 700610 / UA159).